A 671-amino-acid polypeptide reads, in one-letter code: Probable potassium transport system protein Kup 2 (671 aa).

12 consecutive transmembrane segments (helical) span residues 18 to 38 (GFLI…LYAM), 60 to 80 (VSLV…LIAL), 103 to 123 (WLIV…ALTP), 149 to 169 (VTTL…ASLV), 173 to 193 (FGPI…INSF), 218 to 238 (AGFF…ALYS), 252 to 272 (WPFV…WLLA), 292 to 312 (MVIY…QALI), 343 to 363 (LYIP…VLYF), 373 to 393 (YSLA…YFLI), 402 to 422 (IAFI…ASLV), and 424 to 444 (FING…VMFI).

The protein belongs to the HAK/KUP transporter (TC 2.A.72) family.

Its subcellular location is the cell membrane. The catalysed reaction is K(+)(in) + H(+)(in) = K(+)(out) + H(+)(out). Transport of potassium into the cell. Likely operates as a K(+):H(+) symporter. This is Probable potassium transport system protein Kup 2 from Lactococcus lactis subsp. cremoris (strain SK11).